The chain runs to 1080 residues: AP-4 complex subunit epsilon (1080 aa).

5 HEAT repeats span residues 161–198 (DTIPAFLQKVLQLLNHQKPIVRKKSVTVLHRFYRLVGD), 201–238 (LDDDQIIDKLRQSLCDRDPSVMSASICIFLDISEKHST), 369–405 (QLIEQCSKNIAIFLKGKHHNLRYFGIKALASIVKVSP), 406–443 (KLVLPYQVEVIESLESPDETLKRKSFDLLYKMTNQTNV), and 445–479 (PVCSKLIEQLVLSKDQNFKSELISQITNIAEKYSP). Disordered regions lie at residues 711–782 (TPLV…FPQQ), 801–920 (NNNS…NIDP), 933–973 (FSEN…INNN), and 996–1027 (TNNSNNNNNNNNNNNNNNNNNNNNNNNNNNNL). Composition is skewed to low complexity over residues 762 to 782 (QQQQQQQQQQQQQQLQLFPQQ), 801 to 847 (NNNS…PNNQ), 878 to 911 (NKQTPPQNATPQQQQQQQQQQTQNTLSQQQIQKH), 936 to 952 (NNNRNENSNNTDNNQNN), and 962 to 972 (KKSNNENNINN).

The protein belongs to the adaptor complexes large subunit family. In terms of assembly, may be part of the adaptor protein complex 4 (AP-4), a heterotetramer composed of two large adaptins (epsilon-type subunitand beta-type subunit), a medium adaptin (mu-type subunit) and a small adaptin (sigma-type).

The protein localises to the golgi apparatus. It is found in the trans-Golgi network membrane. In terms of biological role, probable component of an adaptor protein complex. Adaptor protein complexes are vesicle coat components involved both in vesicle formation and cargo selection. They control the vesicular transport of proteins in different trafficking pathways. This chain is AP-4 complex subunit epsilon, found in Dictyostelium discoideum (Social amoeba).